Consider the following 670-residue polypeptide: DNA ligase (670 aa).

NAD(+) is bound by residues 34–38 (DFEFD), 83–84 (SL), and E113. The active-site N6-AMP-lysine intermediate is K115. Positions 136, 173, 288, and 312 each coordinate NAD(+). Residues C406, C409, C424, and C430 each coordinate Zn(2+). The 80-residue stretch at 591 to 670 (PESDKFAGKS…EAEFISLLNS (80 aa)) folds into the BRCT domain.

Belongs to the NAD-dependent DNA ligase family. LigA subfamily. Mg(2+) is required as a cofactor. Mn(2+) serves as cofactor.

It carries out the reaction NAD(+) + (deoxyribonucleotide)n-3'-hydroxyl + 5'-phospho-(deoxyribonucleotide)m = (deoxyribonucleotide)n+m + AMP + beta-nicotinamide D-nucleotide.. Its function is as follows. DNA ligase that catalyzes the formation of phosphodiester linkages between 5'-phosphoryl and 3'-hydroxyl groups in double-stranded DNA using NAD as a coenzyme and as the energy source for the reaction. It is essential for DNA replication and repair of damaged DNA. The protein is DNA ligase of Cytophaga hutchinsonii (strain ATCC 33406 / DSM 1761 / CIP 103989 / NBRC 15051 / NCIMB 9469 / D465).